Consider the following 771-residue polypeptide: DNA helicase/primase complex-associated protein (771 aa).

The protein belongs to the herpesviridae HEPA family. In terms of assembly, associates with the primase and the helicase to form the helicase-primase complex. Interacts with the origin-binding protein. Interacts with the polymerase catalytic subunit.

The protein localises to the host nucleus. Functionally, component of the helicase/primase complex. Unwinds the DNA at the replication forks and generates single-stranded DNA for both leading and lagging strand synthesis. The primase synthesizes short RNA primers on the lagging strand that the polymerase presumably elongates using dNTPs. The primase-associated factor has no known catalytic activity in the complex and may serve to facilitate the formation of the replisome by directly interacting with the origin-binding protein and the polymerase. The protein is DNA helicase/primase complex-associated protein of Homo sapiens (Human).